We begin with the raw amino-acid sequence, 200 residues long: Inner membrane-spanning protein YciB (200 aa).

Helical transmembrane passes span 1–21 (MPPL…FFAN), 37–57 (IGAP…IALA), 66–86 (LAIM…LTLW), 103–123 (LFGG…GYVF), 136–156 (KLTL…EIVW), and 167–187 (FKVW…MPLI).

Belongs to the YciB family.

The protein resides in the cell inner membrane. Plays a role in cell envelope biogenesis, maintenance of cell envelope integrity and membrane homeostasis. In Brucella melitensis biotype 1 (strain ATCC 23456 / CCUG 17765 / NCTC 10094 / 16M), this protein is Inner membrane-spanning protein YciB.